The chain runs to 246 residues: Deoxycytidylate 5-hydroxymethyltransferase (246 aa).

The active site involves Cys-148.

The protein belongs to the thymidylate synthase family.

The enzyme catalyses dCMP + (6R)-5,10-methylene-5,6,7,8-tetrahydrofolate + H2O = 5-hydroxymethyl-dCMP + (6S)-5,6,7,8-tetrahydrofolate. The polypeptide is Deoxycytidylate 5-hydroxymethyltransferase (42) (Enterobacteria phage T4 (Bacteriophage T4)).